The following is a 324-amino-acid chain: tRNA U34 carboxymethyltransferase (324 aa).

Carboxy-S-adenosyl-L-methionine-binding positions include Lys-91, Trp-105, Lys-110, Gly-130, 152-154 (DPS), 181-182 (IE), Met-196, Tyr-200, and Arg-315.

The protein belongs to the class I-like SAM-binding methyltransferase superfamily. CmoB family. In terms of assembly, homotetramer.

The enzyme catalyses carboxy-S-adenosyl-L-methionine + 5-hydroxyuridine(34) in tRNA = 5-carboxymethoxyuridine(34) in tRNA + S-adenosyl-L-homocysteine + H(+). Its function is as follows. Catalyzes carboxymethyl transfer from carboxy-S-adenosyl-L-methionine (Cx-SAM) to 5-hydroxyuridine (ho5U) to form 5-carboxymethoxyuridine (cmo5U) at position 34 in tRNAs. In Aliivibrio fischeri (strain ATCC 700601 / ES114) (Vibrio fischeri), this protein is tRNA U34 carboxymethyltransferase.